We begin with the raw amino-acid sequence, 647 residues long: 5-aminolevulinate synthase, non-specific, mitochondrial (647 aa).

The N-terminal 56 residues, 1–56, are a transit peptide targeting the mitochondrion; sequence METVVRRCPFLSRVPQAFLQKAGKSLLFYAQNCPKMMEIGAKPAPRALSTSAVLCQ. The segment at 61–112 is disordered; it reads TPPANEKDKAAKAEVQQAPDGSQQAPDGSQQTADGTQLPSGHPSLASSQGTG. The span at 79 to 112 shows a compositional bias: polar residues; it reads PDGSQQAPDGSQQTADGTQLPSGHPSLASSQGTG. Residues arginine 224, serine 341, and lysine 360 each contribute to the substrate site. Pyridoxal 5'-phosphate-binding residues include serine 393, histidine 421, and threonine 449. Lysine 452 is an active-site residue. Lysine 452 is subject to N6-(pyridoxal phosphate)lysine. Threonine 481 and threonine 482 together coordinate pyridoxal 5'-phosphate. Threonine 569 serves as a coordination point for substrate. The residue at position 583 (proline 583) is a Hydroxyproline.

It belongs to the class-II pyridoxal-phosphate-dependent aminotransferase family. Homodimer. Interacts (hydroxylated form) with VHL. It depends on pyridoxal 5'-phosphate as a cofactor. In terms of processing, in normoxia, is hydroxylated at Pro-583, promoting interaction with VHL, initiating ubiquitination and subsequent degradation via the proteasome. Post-translationally, ubiquitinated; in normoxia following hydroxylation and interaction with VHL, leading to its subsequent degradation via the proteasome.

Its subcellular location is the mitochondrion inner membrane. The enzyme catalyses succinyl-CoA + glycine + H(+) = 5-aminolevulinate + CO2 + CoA. The protein operates within porphyrin-containing compound metabolism; protoporphyrin-IX biosynthesis; 5-aminolevulinate from glycine: step 1/1. Its function is as follows. Catalyzes the pyridoxal 5'-phosphate (PLP)-dependent condensation of succinyl-CoA and glycine to form aminolevulinic acid (ALA), with CoA and CO2 as by-products. This is 5-aminolevulinate synthase, non-specific, mitochondrial (ALAS1) from Bos taurus (Bovine).